A 245-amino-acid polypeptide reads, in one-letter code: 1-(5-phosphoribosyl)-5-[(5-phosphoribosylamino)methylideneamino] imidazole-4-carboxamide isomerase (245 aa).

The Proton acceptor role is filled by Asp7. The Proton donor role is filled by Asp129.

Belongs to the HisA/HisF family.

The protein resides in the cytoplasm. It catalyses the reaction 1-(5-phospho-beta-D-ribosyl)-5-[(5-phospho-beta-D-ribosylamino)methylideneamino]imidazole-4-carboxamide = 5-[(5-phospho-1-deoxy-D-ribulos-1-ylimino)methylamino]-1-(5-phospho-beta-D-ribosyl)imidazole-4-carboxamide. Its pathway is amino-acid biosynthesis; L-histidine biosynthesis; L-histidine from 5-phospho-alpha-D-ribose 1-diphosphate: step 4/9. The chain is 1-(5-phosphoribosyl)-5-[(5-phosphoribosylamino)methylideneamino] imidazole-4-carboxamide isomerase from Psychromonas ingrahamii (strain DSM 17664 / CCUG 51855 / 37).